A 324-amino-acid polypeptide reads, in one-letter code: Beta-ketoacyl-[acyl-carrier-protein] synthase III (324 aa).

Residues Cys-112 and His-249 contribute to the active site. The segment at 250–254 (QANRR) is ACP-binding. Asn-279 is a catalytic residue.

The protein belongs to the thiolase-like superfamily. FabH family. As to quaternary structure, homodimer.

It localises to the cytoplasm. The catalysed reaction is malonyl-[ACP] + acetyl-CoA + H(+) = 3-oxobutanoyl-[ACP] + CO2 + CoA. Its pathway is lipid metabolism; fatty acid biosynthesis. In terms of biological role, catalyzes the condensation reaction of fatty acid synthesis by the addition to an acyl acceptor of two carbons from malonyl-ACP. Catalyzes the first condensation reaction which initiates fatty acid synthesis and may therefore play a role in governing the total rate of fatty acid production. Possesses both acetoacetyl-ACP synthase and acetyl transacylase activities. Its substrate specificity determines the biosynthesis of branched-chain and/or straight-chain of fatty acids. This Streptococcus equi subsp. zooepidemicus (strain MGCS10565) protein is Beta-ketoacyl-[acyl-carrier-protein] synthase III.